We begin with the raw amino-acid sequence, 156 residues long: Small ribosomal subunit protein uS7 (156 aa).

It belongs to the universal ribosomal protein uS7 family. Part of the 30S ribosomal subunit. Contacts proteins S9 and S11.

One of the primary rRNA binding proteins, it binds directly to 16S rRNA where it nucleates assembly of the head domain of the 30S subunit. Is located at the subunit interface close to the decoding center, probably blocks exit of the E-site tRNA. The chain is Small ribosomal subunit protein uS7 from Pseudomonas fluorescens (strain ATCC BAA-477 / NRRL B-23932 / Pf-5).